The primary structure comprises 954 residues: Valine--tRNA ligase (954 aa).

A 'HIGH' region motif is present at residues 48 to 58 (PNVTGSLHMGH). The 'KMSKS' region signature appears at 560–564 (KMSKS). Lysine 563 contributes to the ATP binding site. Positions 883–953 (AGFINKEAEL…LKQQYLAIEA (71 aa)) form a coiled coil.

The protein belongs to the class-I aminoacyl-tRNA synthetase family. ValS type 1 subfamily. In terms of assembly, monomer.

It localises to the cytoplasm. The enzyme catalyses tRNA(Val) + L-valine + ATP = L-valyl-tRNA(Val) + AMP + diphosphate. Its function is as follows. Catalyzes the attachment of valine to tRNA(Val). As ValRS can inadvertently accommodate and process structurally similar amino acids such as threonine, to avoid such errors, it has a 'posttransfer' editing activity that hydrolyzes mischarged Thr-tRNA(Val) in a tRNA-dependent manner. The chain is Valine--tRNA ligase from Pasteurella multocida (strain Pm70).